The following is a 344-amino-acid chain: Lipase chaperone (344 aa).

A helical transmembrane segment spans residues 14 to 34; that stretch reads AVVYGVVGLAAIAGVAMWSGA. The disordered stretch occupies residues 39–78; it reads ATGASGESPEASVAGGSVTAPPQAAVPASTGLPPSLAGSS.

Belongs to the lipase chaperone family.

The protein localises to the cell inner membrane. Its function is as follows. May be involved in the folding of the extracellular lipase during its passage through the periplasm. This is Lipase chaperone (lifO) from Pseudomonas sp. (strain KWI-56).